The following is a 490-amino-acid chain: Protein twist (490 aa).

Disordered regions lie at residues 48-72, 96-165, and 244-264; these read QLQHQQQHLHSHQHHQQHHQQQHAQ, PSNE…TGGS, and QQQQSQQLQQQQPHQQSHAQM. The span at 54–68 shows a compositional bias: basic residues; the sequence is QHLHSHQHHQQHHQQ. 2 stretches are compositionally biased toward low complexity: residues 102-134 and 244-263; these read STSSNQSAQSTSLELNNNNTSSNTNSSGNNPSG and QQQQSQQLQQQQPHQQSHAQ. Ser325 and Ser328 each carry phosphoserine. The disordered stretch occupies residues 330–361; it reads LDGSDAGGKAFRKPRRRLKRKPSKTEETDEFS. Residues 339 to 351 show a composition bias toward basic residues; the sequence is AFRKPRRRLKRKP. Residues 362-413 form the bHLH domain; the sequence is NQRVMANVRERQRTQSLNDAFKSLQQIIPTLPSDKLSKIQTLKLATRYIDFL.

Efficient DNA binding requires dimerization with another bHLH protein. Homodimer. Interacts with akirin. In terms of tissue distribution, expressed in embryonic abdomen; a single cell ventrally, pairs of cells laterally and three cells dorsally in each hemisegment. In the thorax, there are patches of cells associated with the imaginal disks. During larval development, cells proliferate and, in the abdomen, they form ventral, lateral and dorsal clusters, which are the precursors of the adult abdominal muscles. In the thorax, they form populations of cells in the imaginal disks that correspond to the adepithelial cells.

It is found in the nucleus. In terms of biological role, involved in the establishment and dorsoventral patterning of germ layers in the embryo. This Drosophila melanogaster (Fruit fly) protein is Protein twist (twi).